Consider the following 283-residue polypeptide: NAD kinase (283 aa).

Asp-66 (proton acceptor) is an active-site residue. Residues 66 to 67, 140 to 141, Arg-151, Arg-168, Asp-170, and Gln-240 contribute to the NAD(+) site; these read DG and ND.

Belongs to the NAD kinase family. Requires a divalent metal cation as cofactor.

It localises to the cytoplasm. It carries out the reaction NAD(+) + ATP = ADP + NADP(+) + H(+). Involved in the regulation of the intracellular balance of NAD and NADP, and is a key enzyme in the biosynthesis of NADP. Catalyzes specifically the phosphorylation on 2'-hydroxyl of the adenosine moiety of NAD to yield NADP. This Syntrophobacter fumaroxidans (strain DSM 10017 / MPOB) protein is NAD kinase.